Here is a 146-residue protein sequence, read N- to C-terminus: Putative pre-16S rRNA nuclease (146 aa).

It belongs to the YqgF nuclease family.

It localises to the cytoplasm. Its function is as follows. Could be a nuclease involved in processing of the 5'-end of pre-16S rRNA. The sequence is that of Putative pre-16S rRNA nuclease from Burkholderia pseudomallei (strain 668).